The sequence spans 61 residues: Metallothionein-1 (61 aa).

The residue at position 1 (methionine 1) is an N-acetylmethionine. Residues 1–29 (MDPNCSCSTGSTCTCSSSCGCKDCKCTSC) are beta. A divalent metal cation is bound by residues cysteine 5, cysteine 7, cysteine 13, cysteine 15, cysteine 19, cysteine 21, cysteine 24, cysteine 26, cysteine 29, cysteine 33, cysteine 34, cysteine 36, cysteine 37, cysteine 41, cysteine 44, cysteine 48, cysteine 50, cysteine 57, cysteine 59, and cysteine 60. Positions 30–61 (KKSCCSCCPVGCSKCAQGCVCKGASDKCTCCA) are alpha.

This sequence belongs to the metallothionein superfamily. Type 1 family.

Functionally, metallothioneins have a high content of cysteine residues that bind various heavy metals; these proteins are transcriptionally regulated by both heavy metals and glucocorticoids. This chain is Metallothionein-1 (MT1), found in Cricetulus griseus (Chinese hamster).